Reading from the N-terminus, the 388-residue chain is Succinate--CoA ligase [ADP-forming] subunit beta (388 aa).

The region spanning 9 to 244 (KSLFAEYGLP…PSQDDAREAH (236 aa)) is the ATP-grasp domain. Residues K46, 53-55 (GRG), E99, T102, and E107 contribute to the ATP site. Mg(2+)-binding residues include N199 and D213. Residues N264 and 321–323 (GIV) each bind substrate.

Belongs to the succinate/malate CoA ligase beta subunit family. In terms of assembly, heterotetramer of two alpha and two beta subunits. Mg(2+) is required as a cofactor.

It catalyses the reaction succinate + ATP + CoA = succinyl-CoA + ADP + phosphate. The catalysed reaction is GTP + succinate + CoA = succinyl-CoA + GDP + phosphate. It functions in the pathway carbohydrate metabolism; tricarboxylic acid cycle; succinate from succinyl-CoA (ligase route): step 1/1. Functionally, succinyl-CoA synthetase functions in the citric acid cycle (TCA), coupling the hydrolysis of succinyl-CoA to the synthesis of either ATP or GTP and thus represents the only step of substrate-level phosphorylation in the TCA. The beta subunit provides nucleotide specificity of the enzyme and binds the substrate succinate, while the binding sites for coenzyme A and phosphate are found in the alpha subunit. The chain is Succinate--CoA ligase [ADP-forming] subunit beta from Shewanella frigidimarina (strain NCIMB 400).